The primary structure comprises 380 residues: Serpin B7 (380 aa).

Ser217 carries the post-translational modification Phosphoserine.

This sequence belongs to the serpin family. Ov-serpin subfamily.

It localises to the cytoplasm. In terms of biological role, might function as an inhibitor of Lys-specific proteases. Might influence the maturation of megakaryocytes via its action as a serpin. In Mus musculus (Mouse), this protein is Serpin B7 (Serpinb7).